The sequence spans 177 residues: Large ribosomal subunit protein uL6 (177 aa).

This sequence belongs to the universal ribosomal protein uL6 family. In terms of assembly, part of the 50S ribosomal subunit.

This protein binds to the 23S rRNA, and is important in its secondary structure. It is located near the subunit interface in the base of the L7/L12 stalk, and near the tRNA binding site of the peptidyltransferase center. This chain is Large ribosomal subunit protein uL6, found in Rhodopseudomonas palustris (strain HaA2).